We begin with the raw amino-acid sequence, 475 residues long: UDP-N-acetylmuramate--L-alanine ligase (475 aa).

117-123 (GTHGKTT) is a binding site for ATP.

Belongs to the MurCDEF family.

Its subcellular location is the cytoplasm. It carries out the reaction UDP-N-acetyl-alpha-D-muramate + L-alanine + ATP = UDP-N-acetyl-alpha-D-muramoyl-L-alanine + ADP + phosphate + H(+). It participates in cell wall biogenesis; peptidoglycan biosynthesis. In terms of biological role, cell wall formation. This Chlorobaculum tepidum (strain ATCC 49652 / DSM 12025 / NBRC 103806 / TLS) (Chlorobium tepidum) protein is UDP-N-acetylmuramate--L-alanine ligase.